The following is a 596-amino-acid chain: Transketolase-like protein 1 (596 aa).

Residue His46 participates in substrate binding. Thiamine diphosphate contacts are provided by residues Ser49 and 94-96; that span reads GWL. Residue Asp126 coordinates Mg(2+). Residues Gly127 and Asn156 each contribute to the thiamine diphosphate site. Asn156 and Leu158 together coordinate Mg(2+). Thiamine diphosphate-binding residues include Lys218 and His232. Substrate contacts are provided by His232, Arg292, and Ser319. 2 residues coordinate thiamine diphosphate: Glu340 and Phe366. Residue Glu340 is the Proton donor of the active site. His390 and Asp398 together coordinate substrate. Residue Gln402 coordinates thiamine diphosphate. Arg448 contacts substrate.

This sequence belongs to the transketolase family. In terms of assembly, homodimer. It depends on Mg(2+) as a cofactor. Ca(2+) is required as a cofactor. Mn(2+) serves as cofactor. The cofactor is Co(2+). Requires thiamine diphosphate as cofactor. As to expression, widely expressed. Expressed in endothelial cells and in peripheral neurons (at protein level). Not expressed in fetal neocortex. In terms of tissue distribution, expressed in fetal neocortex.

Its subcellular location is the cytoplasm. It catalyses the reaction D-sedoheptulose 7-phosphate + D-glyceraldehyde 3-phosphate = aldehydo-D-ribose 5-phosphate + D-xylulose 5-phosphate. In terms of biological role, catalyzes the transfer of a two-carbon ketol group from a ketose donor to an aldose acceptor, via a covalent intermediate with the cofactor thiamine pyrophosphate. Functionally, during fetal neocortex development, may be essential to maintain the full number of basal radial glia (bRG). bRG are neural progenitor cells that undergo asymmetric divisions, generating a bRG (self-renewal) and a neuron, in contrast to basal intermediate progenitors (bIPs), which typically divide once to give rise to 2 neurons. bRG generate more cortical neurons over time than bIPs. The sequence is that of Transketolase-like protein 1 (TKTL1) from Homo sapiens (Human).